The sequence spans 533 residues: Ribonuclease Y (533 aa).

Residues 16–41 form a disordered region; it reads VERIRRRAEQDAAEQTERVRREAEQI. The span at 22–41 shows a compositional bias: basic and acidic residues; it reads RAEQDAAEQTERVRREAEQI. The 67-residue stretch at 223-289 folds into the KH domain; it reads VVSVLHLPSD…RITLTALVSD (67 aa). Residues 349-442 form the HD domain; sequence VLAHLVESAH…TQAADQISGG (94 aa).

It belongs to the RNase Y family.

Functionally, endoribonuclease that initiates mRNA decay. This chain is Ribonuclease Y, found in Parafrankia sp. (strain EAN1pec).